The chain runs to 251 residues: DNA repair protein RecO (251 aa).

The protein belongs to the RecO family.

Its function is as follows. Involved in DNA repair and RecF pathway recombination. The chain is DNA repair protein RecO from Lactococcus lactis subsp. cremoris (strain SK11).